We begin with the raw amino-acid sequence, 104 residues long: U20-lycotoxin-Ls1c (104 aa).

The signal sequence occupies residues Met-1 to Ala-30. In terms of domain architecture, WAP spans Gly-31–Ser-76. 5 cysteine pairs are disulfide-bonded: Cys-34–Cys-64, Cys-42–Cys-68, Cys-51–Cys-63, Cys-52–Cys-90, and Cys-57–Cys-72.

This sequence belongs to the venom protein 11 family. 02 (wap-2) subfamily. In terms of processing, contains 5 disulfide bonds. Expressed by the venom gland.

It localises to the secreted. Has antibacterial activity. This Lycosa singoriensis (Wolf spider) protein is U20-lycotoxin-Ls1c.